Here is a 638-residue protein sequence, read N- to C-terminus: 1-deoxy-D-xylulose-5-phosphate synthase (638 aa).

Residues histidine 72 and 113-115 each bind thiamine diphosphate; that span reads GHA. Aspartate 144 serves as a coordination point for Mg(2+). Thiamine diphosphate contacts are provided by residues 145–146, asparagine 174, tyrosine 287, and glutamate 370; that span reads GA. Asparagine 174 contacts Mg(2+).

Belongs to the transketolase family. DXPS subfamily. As to quaternary structure, homodimer. It depends on Mg(2+) as a cofactor. Requires thiamine diphosphate as cofactor.

It carries out the reaction D-glyceraldehyde 3-phosphate + pyruvate + H(+) = 1-deoxy-D-xylulose 5-phosphate + CO2. Its pathway is metabolic intermediate biosynthesis; 1-deoxy-D-xylulose 5-phosphate biosynthesis; 1-deoxy-D-xylulose 5-phosphate from D-glyceraldehyde 3-phosphate and pyruvate: step 1/1. Catalyzes the acyloin condensation reaction between C atoms 2 and 3 of pyruvate and glyceraldehyde 3-phosphate to yield 1-deoxy-D-xylulose-5-phosphate (DXP). This is 1-deoxy-D-xylulose-5-phosphate synthase from Thermosynechococcus vestitus (strain NIES-2133 / IAM M-273 / BP-1).